The following is a 142-amino-acid chain: Large ribosomal subunit protein uL13 (142 aa).

This sequence belongs to the universal ribosomal protein uL13 family. Part of the 50S ribosomal subunit.

In terms of biological role, this protein is one of the early assembly proteins of the 50S ribosomal subunit, although it is not seen to bind rRNA by itself. It is important during the early stages of 50S assembly. This is Large ribosomal subunit protein uL13 from Stutzerimonas stutzeri (strain A1501) (Pseudomonas stutzeri).